Reading from the N-terminus, the 1342-residue chain is DNA-directed RNA polymerase subunit beta (1342 aa).

Belongs to the RNA polymerase beta chain family. The RNAP catalytic core consists of 2 alpha, 1 beta, 1 beta' and 1 omega subunit. When a sigma factor is associated with the core the holoenzyme is formed, which can initiate transcription.

It catalyses the reaction RNA(n) + a ribonucleoside 5'-triphosphate = RNA(n+1) + diphosphate. Functionally, DNA-dependent RNA polymerase catalyzes the transcription of DNA into RNA using the four ribonucleoside triphosphates as substrates. The sequence is that of DNA-directed RNA polymerase subunit beta from Vibrio vulnificus (strain CMCP6).